Here is a 578-residue protein sequence, read N- to C-terminus: GRAM domain-containing protein 4 (578 aa).

Positions 83–135 (HLEIALLEKHFLQEELRKLREETNIDTLKQELEKERQRRTELEQKITDIAKTR) form a coiled coil. The tract at residues 132–157 (AKTRTDESATQQLSKGPSQTNGADKQ) is disordered. A compositionally biased stretch (polar residues) spans 139-154 (SATQQLSKGPSQTNGA). 3 helical membrane passes run 236–256 (IAFI…MFLF), 334–354 (MTQK…FFHY), and 356–376 (TIGL…DFIF). In terms of domain architecture, GRAM spans 446-524 (SSFHEIFSLL…TDITDIQKYK (79 aa)).

It is found in the mitochondrion membrane. The protein localises to the endoplasmic reticulum membrane. Plays a role as a mediator of e2f1-induced apoptosis in the absence of p53/TP53. The protein is GRAM domain-containing protein 4 (gramd4) of Xenopus laevis (African clawed frog).